The following is a 361-amino-acid chain: Phospho-N-acetylmuramoyl-pentapeptide-transferase (361 aa).

10 helical membrane-spanning segments follow: residues 21–41 (YITF…FVIG), 72–92 (TPTM…LLWV), 94–114 (LANV…LIGF), 135–155 (LAWT…VTPH), 169–189 (LLVN…VGAS), 200–220 (GLAI…AYLS), 240–260 (LAVF…FNAP), 263–283 (MVFM…AVSV), 289–309 (LVLA…MVQV), and 338–358 (TVVI…LSTL).

This sequence belongs to the glycosyltransferase 4 family. MraY subfamily. It depends on Mg(2+) as a cofactor.

It is found in the cell inner membrane. It carries out the reaction UDP-N-acetyl-alpha-D-muramoyl-L-alanyl-gamma-D-glutamyl-meso-2,6-diaminopimeloyl-D-alanyl-D-alanine + di-trans,octa-cis-undecaprenyl phosphate = di-trans,octa-cis-undecaprenyl diphospho-N-acetyl-alpha-D-muramoyl-L-alanyl-D-glutamyl-meso-2,6-diaminopimeloyl-D-alanyl-D-alanine + UMP. It functions in the pathway cell wall biogenesis; peptidoglycan biosynthesis. In terms of biological role, catalyzes the initial step of the lipid cycle reactions in the biosynthesis of the cell wall peptidoglycan: transfers peptidoglycan precursor phospho-MurNAc-pentapeptide from UDP-MurNAc-pentapeptide onto the lipid carrier undecaprenyl phosphate, yielding undecaprenyl-pyrophosphoryl-MurNAc-pentapeptide, known as lipid I. In Rhodospirillum centenum (strain ATCC 51521 / SW), this protein is Phospho-N-acetylmuramoyl-pentapeptide-transferase.